The sequence spans 329 residues: D-threo-aldose 1-dehydrogenase (329 aa).

Tyr-58 acts as the Proton donor in catalysis. His-145 serves as a coordination point for substrate.

This sequence belongs to the aldo/keto reductase family.

It catalyses the reaction a D-threo-aldose + NAD(+) = a D-threo-aldono-1,5-lactone + NADH + H(+). With respect to regulation, inhibited strongly by Hg(2+), Cd(2+) and para-chloromercuribenzoic acid (PCMB) and weakly by Zn(2+) and iodoacetamide. Also inhibited strongly by L-xylose but not D-glucose. Catalyzes the oxidation of L-fucose to L-fuconolactone in the presence of NADP(+). Also active against L-galactose and, to a much lesser degree, D-arabinose. Uses NADP(+) as a hydrogen acceptor much more efficiently than NAD(+). This is D-threo-aldose 1-dehydrogenase from Pseudomonas sp.